The primary structure comprises 49 residues: Large ribosomal subunit protein bL33 (49 aa).

It belongs to the bacterial ribosomal protein bL33 family.

This is Large ribosomal subunit protein bL33 from Desulfitobacterium hafniense (strain Y51).